Here is a 672-residue protein sequence, read N- to C-terminus: Transketolase (672 aa).

Substrate is bound at residue histidine 35. Residues histidine 75 and glycine 124–leucine 126 contribute to the thiamine diphosphate site. Aspartate 162 contacts Mg(2+). Residues glycine 163 and asparagine 192 each coordinate thiamine diphosphate. The Mg(2+) site is built by asparagine 192 and isoleucine 194. Substrate is bound by residues histidine 266, arginine 361, and serine 388. Histidine 266 contacts thiamine diphosphate. Catalysis depends on glutamate 415, which acts as the Proton donor. A thiamine diphosphate-binding site is contributed by phenylalanine 441. 3 residues coordinate substrate: histidine 465, aspartate 473, and arginine 524.

Belongs to the transketolase family. As to quaternary structure, homodimer. Mg(2+) serves as cofactor. The cofactor is Ca(2+). Requires Mn(2+) as cofactor. Co(2+) is required as a cofactor. It depends on thiamine diphosphate as a cofactor.

It carries out the reaction D-sedoheptulose 7-phosphate + D-glyceraldehyde 3-phosphate = aldehydo-D-ribose 5-phosphate + D-xylulose 5-phosphate. Its pathway is carbohydrate biosynthesis; Calvin cycle. It participates in carbohydrate degradation; pentose phosphate pathway. In terms of biological role, catalyzes the transfer of a two-carbon ketol group from a ketose donor to an aldose acceptor, via a covalent intermediate with the cofactor thiamine pyrophosphate. The sequence is that of Transketolase (tktA) from Rhodobacter capsulatus (strain ATCC BAA-309 / NBRC 16581 / SB1003).